The following is a 527-amino-acid chain: MKLVDLTADLQALLASPNVHHNLSAPKLTEKVISRNEGTLTSTGAVRATTGAYTGRSPKDKFIVREQSTENQIDWGAVNQPISEEAFEKLYAKVVSYLKQRDELFVFEGFAGADEKYRLPITVVNEFAWHNLFARQLFIRPETDERDTQAQPFTILSAPHFKADPETDGTHSETFIIVSFEKRVILIGGTEYAGEMKKSIFSIMNFLLPQQDILPMHCSANVGEKGDVALFFGLSGTGKTTLSADADRKLIGDDEHGWSDSGVFNIEGGCYAKCINLSEEKEPQIFRAIRFGSVLENVVLDEKTGEADYDNSFYTENTRAAYPIEMIGNIVQPSIAGHPQAIVFLTADAFGVLPPISKLTKEQAMYHFLSGYTSKLAGTERGVTSPQTTFSTCFGSPFLPLPAHVYAEMLGHKIDEHGVQVFLVNTGWTGGGYGVGERMKLSYTRAMVKAAIEGRLNQTDMTADSIFGLRSPVHVPGVPDEVLQPENTWSDKQAYNEKALFLANEFKENFKKFSHADSIAKAGGPLV.

Positions 56, 192, and 198 each coordinate substrate. ATP-binding positions include Lys-198, His-217, and 233-241 (GLSGTGKTT). Lys-198 and His-217 together coordinate Mn(2+). Asp-254 is a Mn(2+) binding site. Positions 282, 319, and 444 each coordinate ATP. Arg-319 contacts substrate.

Belongs to the phosphoenolpyruvate carboxykinase (ATP) family. Requires Mn(2+) as cofactor.

Its subcellular location is the cytoplasm. The catalysed reaction is oxaloacetate + ATP = phosphoenolpyruvate + ADP + CO2. Its pathway is carbohydrate biosynthesis; gluconeogenesis. Involved in the gluconeogenesis. Catalyzes the conversion of oxaloacetate (OAA) to phosphoenolpyruvate (PEP) through direct phosphoryl transfer between the nucleoside triphosphate and OAA. The chain is Phosphoenolpyruvate carboxykinase (ATP) from Bacillus velezensis (strain DSM 23117 / BGSC 10A6 / LMG 26770 / FZB42) (Bacillus amyloliquefaciens subsp. plantarum).